A 149-amino-acid chain; its full sequence is Succinate dehydrogenase assembly factor 2, mitochondrial (149 aa).

It belongs to the SDHAF2 family. Interacts with the flavoprotein subunit within the SDH catalytic dimer.

The protein localises to the mitochondrion matrix. Functionally, plays an essential role in the assembly of succinate dehydrogenase (SDH), an enzyme complex (also referred to as respiratory complex II) that is a component of both the tricarboxylic acid (TCA) cycle and the mitochondrial electron transport chain, and which couples the oxidation of succinate to fumarate with the reduction of ubiquinone (coenzyme Q) to ubiquinol. Required for flavinylation (covalent attachment of FAD) of the flavoprotein subunit of the SDH catalytic dimer. This Scheffersomyces stipitis (strain ATCC 58785 / CBS 6054 / NBRC 10063 / NRRL Y-11545) (Yeast) protein is Succinate dehydrogenase assembly factor 2, mitochondrial.